We begin with the raw amino-acid sequence, 399 residues long: MSKEKVILAYSGGLDTSVAITWLKKDYDVIAVCMDVGEGKDLEFIHDKALTVGAVESYVLDVKDEFAEDYVLPALQAHAYYEQKYPLVSALSRPIIAKKLVEIAHKTGATTIAHGCTGKGNDQVRFEVAIAALDPSLKVVAPVREWKWSREEEIEYAKANGVPVPADLDNPYSVDQNLWGRANECGVLENPWNQAPEEAFGITNSPESAPDEAEYVDVTFKEGKPVALNGKEMKLADLIQEMNVIAGKHGVGRIDHVENRLVGIKSREIYECPGAIALLTAHKEIEDLTLVREVSHFKPILENELSNLIYNALWFSPATEAIIAYIKETQKVVNGIAKVKLYKGHAQVVARQSANSLYDENLATYTSADSFDQDAAIGFIKLWGLPTQVNSQVNHPFDK.

9 to 17 (AYSGGLDTS) is a binding site for ATP. Tyrosine 85 serves as a coordination point for L-citrulline. Glycine 115 serves as a coordination point for ATP. L-aspartate contacts are provided by threonine 117, asparagine 121, and aspartate 122. Residue asparagine 121 coordinates L-citrulline. Positions 125, 173, 258, and 270 each coordinate L-citrulline.

The protein belongs to the argininosuccinate synthase family. Type 1 subfamily. As to quaternary structure, homotetramer.

Its subcellular location is the cytoplasm. It catalyses the reaction L-citrulline + L-aspartate + ATP = 2-(N(omega)-L-arginino)succinate + AMP + diphosphate + H(+). It functions in the pathway amino-acid biosynthesis; L-arginine biosynthesis; L-arginine from L-ornithine and carbamoyl phosphate: step 2/3. This chain is Argininosuccinate synthase, found in Streptococcus thermophilus (strain CNRZ 1066).